Consider the following 85-residue polypeptide: Progonadoliberin-2 (85 aa).

An N-terminal signal peptide occupies residues 1-23 (MCASRLVLLLGLLLCVGAHLSSG). The residue at position 24 (Gln24) is a Pyrrolidone carboxylic acid. At Gly33 the chain carries Glycine amide.

Belongs to the GnRH family. In terms of tissue distribution, midbrain tegmentum.

It is found in the secreted. Stimulates the secretion of gonadotropins. The sequence is that of Progonadoliberin-2 (gnrh2) from Verasper moseri (Barfin flounder).